A 117-amino-acid polypeptide reads, in one-letter code: MPLYEHVMIARQDLSNTQAEGLIEHFGTVLSDNGGKLVDHEYWGVKTMAYKINKNRKGHYAFLRSDAPAPAVHEMERLMRLHDDVMRVLTIKVDEHAELPSVQMQKREERGDRRERR.

The protein belongs to the bacterial ribosomal protein bS6 family.

Functionally, binds together with bS18 to 16S ribosomal RNA. This chain is Small ribosomal subunit protein bS6, found in Roseobacter denitrificans (strain ATCC 33942 / OCh 114) (Erythrobacter sp. (strain OCh 114)).